Reading from the N-terminus, the 101-residue chain is MLADKVKLSAKEILEKEFKTGVRGYKQEEVDKFLDMVIKDYETFNQEIEKLQQENLHLSKQLEEAVEQGKRQPAQSNTTNFDILKRLSNLEKHVFGSKLYD.

Residues 34-71 (LDMVIKDYETFNQEIEKLQQENLHLSKQLEEAVEQGKR) adopt a coiled-coil conformation.

It belongs to the GpsB family. As to quaternary structure, forms polymers through the coiled coil domains. Interacts with PBP1, MreC and EzrA.

It localises to the cytoplasm. Divisome component that associates with the complex late in its assembly, after the Z-ring is formed, and is dependent on DivIC and PBP2B for its recruitment to the divisome. Together with EzrA, is a key component of the system that regulates PBP1 localization during cell cycle progression. Its main role could be the removal of PBP1 from the cell pole after pole maturation is completed. Also contributes to the recruitment of PBP1 to the division complex. Not essential for septum formation. The polypeptide is Cell cycle protein GpsB (Bacillus pumilus (strain SAFR-032)).